Reading from the N-terminus, the 200-residue chain is Transcriptional repressor NrdR (200 aa).

A zinc finger lies at 3-34 (CPRCGKQEIRVLESRSAEGGQSVRRRRECMSC). The ATP-cone domain occupies 49-139 (IMVIKRDGSR…VYRKFQGIKD (91 aa)). Positions 158 to 200 (LERPLRNSPPSESESTASPDWVGGIPQLLDQNDTSSNLSEIPK) are disordered. Positions 186-200 (LDQNDTSSNLSEIPK) are enriched in polar residues.

This sequence belongs to the NrdR family. Requires Zn(2+) as cofactor.

Negatively regulates transcription of bacterial ribonucleotide reductase nrd genes and operons by binding to NrdR-boxes. This Synechococcus sp. (strain JA-3-3Ab) (Cyanobacteria bacterium Yellowstone A-Prime) protein is Transcriptional repressor NrdR.